Consider the following 503-residue polypeptide: Aminoaldehyde dehydrogenase 2, peroxisomal (503 aa).

Residues isoleucine 28 and aspartate 99 each contribute to the Na(+) site. Positions 161 and 185 each coordinate NAD(+). Leucine 189 serves as a coordination point for Na(+). Serine 239 serves as a coordination point for NAD(+). The active-site Proton acceptor is the glutamate 260. The Nucleophile role is filled by cysteine 294. The Microbody targeting signal motif lies at 501–503 (AKL).

This sequence belongs to the aldehyde dehydrogenase family. As to quaternary structure, forms homodimers.

The protein resides in the peroxisome. It carries out the reaction 3-aminopropanal + NAD(+) + H2O = beta-alanine + NADH + 2 H(+). The catalysed reaction is 4-aminobutanal + NAD(+) + H2O = 4-aminobutanoate + NADH + 2 H(+). It catalyses the reaction 4-guanidinobutanal + NAD(+) + H2O = 4-guanidinobutanoate + NADH + 2 H(+). It functions in the pathway amine and polyamine biosynthesis; betaine biosynthesis via choline pathway; betaine from betaine aldehyde: step 1/1. Functionally, dehydrogenase that catalyzes the oxidation of several aminoaldehydes. Metabolizes and detoxifies aldehyde products of polyamine degradation to non-toxic amino acids. Catalyzes the oxidation of 3-aminopropanal to beta-alanine. Catalyzes the oxidation of 4-aminobutanal to 4-aminobutanoate. Catalyzes the oxidation of 4-guanidinobutanal to 4-guanidinobutanoate. The protein is Aminoaldehyde dehydrogenase 2, peroxisomal of Pisum sativum (Garden pea).